A 516-amino-acid chain; its full sequence is D-aminopeptidase (516 aa).

Catalysis depends on Ser-61, which acts as the Nucleophile. The active-site Proton donor/acceptor is Lys-64. The important for specificity stretch occupies residues 476-486 (RRSMDAPAPGD). Asp-480 contacts substrate.

Belongs to the peptidase S12 family. Homodimer.

The enzyme catalyses Release of an N-terminal D-amino acid from a peptide, Xaa-|-Yaa-, in which Xaa is preferably D-Ala, D-Ser or D-Thr. D-amino acid amides and methyl esters also are hydrolyzed, as is glycine amide.. Its activity is regulated as follows. Inhibited by beta-lactam compounds such as 6-aminopenicillic acid, 7-aminocephalosporanic acid, benzylpenicillin and ampicillin. Inhibited by p-chloromercuribenzoate. In terms of biological role, hydrolyzes N-terminal residues in D-amino acid-containing peptides. The polypeptide is D-aminopeptidase (Cereibacter sphaeroides (strain KD131 / KCTC 12085) (Rhodobacter sphaeroides)).